The primary structure comprises 243 residues: 3-deoxy-manno-octulosonate cytidylyltransferase (243 aa).

This sequence belongs to the KdsB family.

It localises to the cytoplasm. It carries out the reaction 3-deoxy-alpha-D-manno-oct-2-ulosonate + CTP = CMP-3-deoxy-beta-D-manno-octulosonate + diphosphate. It functions in the pathway nucleotide-sugar biosynthesis; CMP-3-deoxy-D-manno-octulosonate biosynthesis; CMP-3-deoxy-D-manno-octulosonate from 3-deoxy-D-manno-octulosonate and CTP: step 1/1. It participates in bacterial outer membrane biogenesis; lipopolysaccharide biosynthesis. In terms of biological role, activates KDO (a required 8-carbon sugar) for incorporation into bacterial lipopolysaccharide in Gram-negative bacteria. The protein is 3-deoxy-manno-octulosonate cytidylyltransferase of Bartonella tribocorum (strain CIP 105476 / IBS 506).